The primary structure comprises 145 residues: Small ribosomal subunit protein uS12A (145 aa).

Hydroxyproline is present on Pro-64.

This sequence belongs to the universal ribosomal protein uS12 family.

The protein is Small ribosomal subunit protein uS12A (RPS23A) of Naumovozyma castellii (Yeast).